We begin with the raw amino-acid sequence, 305 residues long: Methionyl-tRNA formyltransferase (305 aa).

111–114 (SLLP) lines the (6S)-5,6,7,8-tetrahydrofolate pocket.

Belongs to the Fmt family.

It carries out the reaction L-methionyl-tRNA(fMet) + (6R)-10-formyltetrahydrofolate = N-formyl-L-methionyl-tRNA(fMet) + (6S)-5,6,7,8-tetrahydrofolate + H(+). Functionally, attaches a formyl group to the free amino group of methionyl-tRNA(fMet). The formyl group appears to play a dual role in the initiator identity of N-formylmethionyl-tRNA by promoting its recognition by IF2 and preventing the misappropriation of this tRNA by the elongation apparatus. This is Methionyl-tRNA formyltransferase from Helicobacter pylori (strain J99 / ATCC 700824) (Campylobacter pylori J99).